The sequence spans 433 residues: Vesicle-associated protein (433 aa).

2 repeat units span residues 112–122 and 219–229. Positions 112–350 are 3 X 11 AA repeats of G-G-G-I-G-G-G-L-G-G-G; the sequence is GGGIGGGLGG…GGIGGGLGGG (239 aa). Positions 266–274 match the Nuclear localization signal motif; it reads VDGKKKGKG. The stretch at 340–350 is repeat 3; the sequence is GGGIGGGLGGG. 2 disordered regions span residues 366 to 389 and 411 to 433; these read RVGG…DGDG and HGKG…NVSG. Over residues 423–433 the composition is skewed to basic and acidic residues; sequence DIERPDLNVSG.

In terms of tissue distribution, egg cortex.

The protein resides in the microsome membrane. It is found in the nucleus. Its subcellular location is the endoplasmic reticulum membrane. In terms of biological role, may function as a multidomain RNA-binding protein. May play a role in nuclear RNA processing and in early development. This Strongylocentrotus purpuratus (Purple sea urchin) protein is Vesicle-associated protein (VAP-1).